A 166-amino-acid polypeptide reads, in one-letter code: Small ribosomal subunit protein uS5 (166 aa).

The S5 DRBM domain maps to 11–74 (LQEKLIAVNR…EKARRNMINV (64 aa)).

The protein belongs to the universal ribosomal protein uS5 family. Part of the 30S ribosomal subunit. Contacts proteins S4 and S8.

In terms of biological role, with S4 and S12 plays an important role in translational accuracy. Located at the back of the 30S subunit body where it stabilizes the conformation of the head with respect to the body. This is Small ribosomal subunit protein uS5 from Cronobacter sakazakii (strain ATCC BAA-894) (Enterobacter sakazakii).